Consider the following 212-residue polypeptide: Ribonuclease HII (212 aa).

Positions 1–205 (MTICGVDEAG…VQDILDRASQ (205 aa)) constitute an RNase H type-2 domain. Residues Asp7, Glu8, and Asp100 each contribute to the a divalent metal cation site.

Belongs to the RNase HII family. Requires Mn(2+) as cofactor. The cofactor is Mg(2+).

The protein localises to the cytoplasm. It carries out the reaction Endonucleolytic cleavage to 5'-phosphomonoester.. Endonuclease that specifically degrades the RNA of RNA-DNA hybrids. The polypeptide is Ribonuclease HII (Methanocorpusculum labreanum (strain ATCC 43576 / DSM 4855 / Z)).